The primary structure comprises 130 residues: ER membrane protein complex subunit 5 (130 aa).

The Cytoplasmic segment spans residues 1 to 3 (MAS). The helical transmembrane segment at 4-22 (SFWKGVVGIGLFALAHAAF) threads the bilayer. Topologically, residues 23–43 (SAAQHRSYMRLTEKENETLPI) are lumenal. The chain crosses the membrane as a helical span at residues 44–63 (DIVLQTLLSFVITCYGIVHI). Residues 64–130 (SGEFKDMDAS…LRLRKLENFH (67 aa)) lie on the Cytoplasmic side of the membrane.

The protein belongs to the membrane magnesium transporter (TC 1.A.67) family. Component of the ER membrane protein complex (EMC).

It localises to the endoplasmic reticulum membrane. Its subcellular location is the golgi apparatus membrane. It is found in the early endosome membrane. Functionally, part of the endoplasmic reticulum membrane protein complex (EMC) that enables the energy-independent insertion into endoplasmic reticulum membranes of newly synthesized membrane proteins. Preferentially accommodates proteins with transmembrane domains that are weakly hydrophobic or contain destabilizing features such as charged and aromatic residues. Involved in the cotranslational insertion of multi-pass membrane proteins in which stop-transfer membrane-anchor sequences become ER membrane spanning helices. It is also required for the post-translational insertion of tail-anchored/TA proteins in endoplasmic reticulum membranes. By mediating the proper cotranslational insertion of N-terminal transmembrane domains in an N-exo topology, with translocated N-terminus in the lumen of the ER, controls the topology of multi-pass membrane proteins like the G protein-coupled receptors. By regulating the insertion of various proteins in membranes, it is indirectly involved in many cellular processes. May be involved in Mg(2+) transport. The sequence is that of ER membrane protein complex subunit 5 from Danio rerio (Zebrafish).